We begin with the raw amino-acid sequence, 177 residues long: Transcription termination/antitermination protein NusG (177 aa).

Positions 125-150 constitute a KOW domain; sequence EGENVRITEGPFANFTAIVEEYDMVR.

It belongs to the NusG family.

Functionally, participates in transcription elongation, termination and antitermination. The chain is Transcription termination/antitermination protein NusG from Campylobacter jejuni subsp. jejuni serotype O:2 (strain ATCC 700819 / NCTC 11168).